Consider the following 151-residue polypeptide: S-ribosylhomocysteine lyase (151 aa).

Residues His54, His58, and Cys121 each coordinate Fe cation.

It belongs to the LuxS family. In terms of assembly, homodimer. It depends on Fe cation as a cofactor.

The enzyme catalyses S-(5-deoxy-D-ribos-5-yl)-L-homocysteine = (S)-4,5-dihydroxypentane-2,3-dione + L-homocysteine. Its function is as follows. Involved in the synthesis of autoinducer 2 (AI-2) which is secreted by bacteria and is used to communicate both the cell density and the metabolic potential of the environment. The regulation of gene expression in response to changes in cell density is called quorum sensing. Catalyzes the transformation of S-ribosylhomocysteine (RHC) to homocysteine (HC) and 4,5-dihydroxy-2,3-pentadione (DPD). This Clostridium perfringens (strain ATCC 13124 / DSM 756 / JCM 1290 / NCIMB 6125 / NCTC 8237 / Type A) protein is S-ribosylhomocysteine lyase.